A 540-amino-acid chain; its full sequence is Raucaffricine-O-beta-D-glucosidase (540 aa).

A beta-D-glucoside is bound by residues Gln-36, His-140, and 185-186 (NE). Catalysis depends on Glu-186, which acts as the Proton donor. Cys-221 and Cys-230 are oxidised to a cystine. A beta-D-glucoside contacts are provided by residues Tyr-347, Glu-420, Trp-469, 476 to 477 (EW), and Phe-485. Catalysis depends on Glu-420, which acts as the Nucleophile.

It belongs to the glycosyl hydrolase 1 family.

It catalyses the reaction raucaffricine + H2O = vomilenine + D-glucose. The enzyme catalyses vomilenine + UDP-alpha-D-glucose = raucaffricine + UDP + H(+). Functionally, glucosidase specifically involved in alkaloid biosynthesis leading to the accumulation of several alkaloids, including ajmaline, an important plant-derived pharmaceutical used in the treatment of heart disorders. In Rauvolfia serpentina (Serpentine wood), this protein is Raucaffricine-O-beta-D-glucosidase.